The chain runs to 757 residues: Cellulose synthase-like protein B1 (757 aa).

2 helical membrane-spanning segments follow: residues threonine 18–leucine 38 and valine 50–cysteine 70. Aspartate 136 is a catalytic residue. Residues glutamate 186–aspartate 216 adopt a coiled-coil conformation. Residue aspartate 462 is part of the active site. Helical transmembrane passes span leucine 533–leucine 553, leucine 569–phenylalanine 589, leucine 615–isoleucine 635, phenylalanine 674–glycine 694, alanine 710–phenylalanine 730, and threonine 737–valine 757.

Belongs to the glycosyltransferase 2 family. Plant cellulose synthase-like B subfamily. As to expression, expressed in young seedlings, primarily in the vascular tissue.

The protein resides in the golgi apparatus membrane. Its function is as follows. Thought to be a Golgi-localized beta-glycan synthase that polymerize the backbones of noncellulosic polysaccharides (hemicelluloses) of plant cell wall. This is Cellulose synthase-like protein B1 (CSLB1) from Arabidopsis thaliana (Mouse-ear cress).